Consider the following 338-residue polypeptide: Large ribosomal subunit protein uL3 (338 aa).

The disordered stretch occupies residues 1 to 37; the sequence is MPQPSRPRKGSMGFSPRKRAESEVPRIRSWASNDGAP.

This sequence belongs to the universal ribosomal protein uL3 family. Part of the 50S ribosomal subunit. Forms a cluster with proteins L14 and L24e.

Functionally, one of the primary rRNA binding proteins, it binds directly near the 3'-end of the 23S rRNA, where it nucleates assembly of the 50S subunit. The sequence is that of Large ribosomal subunit protein uL3 from Haloquadratum walsbyi (strain DSM 16790 / HBSQ001).